We begin with the raw amino-acid sequence, 243 residues long: Uridylate kinase (243 aa).

12–15 (KLSG) lines the ATP pocket. A UMP-binding site is contributed by G54. 2 residues coordinate ATP: G55 and R59. Residue 135–142 (TGNPYFTT) coordinates UMP. Positions 163, 169, and 172 each coordinate ATP.

Belongs to the UMP kinase family. As to quaternary structure, homohexamer.

The protein resides in the cytoplasm. It catalyses the reaction UMP + ATP = UDP + ADP. It participates in pyrimidine metabolism; CTP biosynthesis via de novo pathway; UDP from UMP (UMPK route): step 1/1. Its activity is regulated as follows. Inhibited by UTP. Functionally, catalyzes the reversible phosphorylation of UMP to UDP. This is Uridylate kinase from Roseiflexus sp. (strain RS-1).